Here is a 701-residue protein sequence, read N- to C-terminus: Elongation factor G (701 aa).

A tr-type G domain is found at 8–291 (GRYRNIGIVA…AVIDYLPAPT (284 aa)). GTP is bound by residues 17–24 (AHVDAGKT), 89–93 (DTPGH), and 143–146 (NKMD).

Belongs to the TRAFAC class translation factor GTPase superfamily. Classic translation factor GTPase family. EF-G/EF-2 subfamily.

It localises to the cytoplasm. Its function is as follows. Catalyzes the GTP-dependent ribosomal translocation step during translation elongation. During this step, the ribosome changes from the pre-translocational (PRE) to the post-translocational (POST) state as the newly formed A-site-bound peptidyl-tRNA and P-site-bound deacylated tRNA move to the P and E sites, respectively. Catalyzes the coordinated movement of the two tRNA molecules, the mRNA and conformational changes in the ribosome. This is Elongation factor G from Pseudomonas syringae pv. syringae (strain B728a).